The sequence spans 95 residues: Progonadoliberin-1 (95 aa).

Residues 1–25 form the signal peptide; the sequence is MAPQTSNLWILLLLVVVMMMSQGCC. The residue at position 26 (Gln26) is a Pyrrolidone carboxylic acid. The residue at position 35 (Gly35) is a Glycine amide.

This sequence belongs to the GnRH family.

It localises to the secreted. Its function is as follows. Stimulates the secretion of gonadotropins. This Sparus aurata (Gilthead sea bream) protein is Progonadoliberin-1 (gnrh1).